Here is a 256-residue protein sequence, read N- to C-terminus: uncharacterized protein (256 aa).

Residues 1 to 22 form the signal peptide; it reads MKSIKRIGLCISLLILSIFVTS. Cys-23 is lipidated: N-palmitoyl cysteine. A lipid anchor (S-diacylglycerol cysteine) is attached at Cys-23.

Belongs to the staphylococcal tandem lipoprotein family.

Its subcellular location is the cell membrane. This is an uncharacterized protein from Staphylococcus aureus (strain USA300).